The sequence spans 313 residues: Ornithine carbamoyltransferase (313 aa).

Carbamoyl phosphate contacts are provided by residues Ser57–Thr60, Arg108, and His135–Gln138. Residues Asn167, Asp231, and Ser235 to Met236 contribute to the L-ornithine site. Carbamoyl phosphate contacts are provided by residues Cys272–Leu273 and Arg300.

The protein belongs to the aspartate/ornithine carbamoyltransferase superfamily. OTCase family.

The protein resides in the cytoplasm. The enzyme catalyses carbamoyl phosphate + L-ornithine = L-citrulline + phosphate + H(+). Its pathway is amino-acid biosynthesis; L-arginine biosynthesis; L-arginine from L-ornithine and carbamoyl phosphate: step 1/3. In terms of biological role, reversibly catalyzes the transfer of the carbamoyl group from carbamoyl phosphate (CP) to the N(epsilon) atom of ornithine (ORN) to produce L-citrulline. The protein is Ornithine carbamoyltransferase of Thermotoga petrophila (strain ATCC BAA-488 / DSM 13995 / JCM 10881 / RKU-1).